Here is a 233-residue protein sequence, read N- to C-terminus: Small ribosomal subunit protein uS2c (233 aa).

It belongs to the universal ribosomal protein uS2 family.

Its subcellular location is the plastid. It localises to the chloroplast. The polypeptide is Small ribosomal subunit protein uS2c (rps2) (Staurastrum punctulatum (Green alga)).